Consider the following 531-residue polypeptide: Dihydropyrimidinase (531 aa).

Residues His103, His105, and Lys193 each coordinate Zn(2+). Lys193 carries the post-translational modification N6-carboxylysine. Tyr198 serves as a coordination point for substrate. Zn(2+) is bound by residues His226 and His282. Ser332 provides a ligand contact to substrate. A Zn(2+)-binding site is contributed by Asp359. Asn380 contacts substrate.

The protein belongs to the metallo-dependent hydrolases superfamily. Hydantoinase/dihydropyrimidinase family. Homotetramer. Requires Zn(2+) as cofactor. Carboxylation allows a single lysine to coordinate two zinc ions.

The protein localises to the endoplasmic reticulum. It carries out the reaction 5,6-dihydrouracil + H2O = 3-(carbamoylamino)propanoate + H(+). The protein operates within amino-acid biosynthesis; beta-alanine biosynthesis. In terms of biological role, catalyzes the second step of the reductive pyrimidine degradation, the reversible hydrolytic ring opening of dihydropyrimidines. Can catalyze the ring opening of 5,6-dihydrouracil to N-carbamoyl-alanine and of 5,6-dihydrothymine to N-carbamoyl-amino isobutyrate. Involved in the recycling of nitrogen from nucleobases to general nitrogen metabolism. In Arabidopsis thaliana (Mouse-ear cress), this protein is Dihydropyrimidinase.